The sequence spans 427 residues: Homogentisate 1,2-dioxygenase (427 aa).

H285 (proton acceptor) is an active-site residue. 2 residues coordinate Fe cation: H328 and E334. The homogentisate site is built by Y343 and H364. Residue H364 coordinates Fe cation.

It belongs to the homogentisate dioxygenase family. As to quaternary structure, hexamer; dimer of trimers. Requires Fe cation as cofactor.

The catalysed reaction is homogentisate + O2 = 4-maleylacetoacetate + H(+). Its pathway is amino-acid degradation; L-phenylalanine degradation; acetoacetate and fumarate from L-phenylalanine: step 4/6. Its function is as follows. Involved in the catabolism of homogentisate (2,5-dihydroxyphenylacetate or 2,5-OH-PhAc), a central intermediate in the degradation of phenylalanine and tyrosine. Catalyzes the oxidative ring cleavage of the aromatic ring of homogentisate to yield maleylacetoacetate. This chain is Homogentisate 1,2-dioxygenase, found in Caulobacter sp. (strain K31).